Reading from the N-terminus, the 486-residue chain is Cysteine--tRNA ligase (486 aa).

C29 is a Zn(2+) binding site. Residues 31–41 (VTVYDYCHLGH) carry the 'HIGH' region motif. Zn(2+)-binding residues include C214, H239, and E243. The short motif at 271-275 (KMSKS) is the 'KMSKS' region element. Residue K274 coordinates ATP.

The protein belongs to the class-I aminoacyl-tRNA synthetase family. In terms of assembly, monomer. The cofactor is Zn(2+).

The protein resides in the cytoplasm. It carries out the reaction tRNA(Cys) + L-cysteine + ATP = L-cysteinyl-tRNA(Cys) + AMP + diphosphate. This is Cysteine--tRNA ligase from Nostoc sp. (strain PCC 7120 / SAG 25.82 / UTEX 2576).